A 194-amino-acid polypeptide reads, in one-letter code: Dephospho-CoA kinase (194 aa).

The DPCK domain maps to 4 to 194 (ALGLTGSIGM…HLVSKLTEGT (191 aa)). Position 12-17 (12-17 (GMGKST)) interacts with ATP.

It belongs to the CoaE family.

It is found in the cytoplasm. The catalysed reaction is 3'-dephospho-CoA + ATP = ADP + CoA + H(+). It participates in cofactor biosynthesis; coenzyme A biosynthesis; CoA from (R)-pantothenate: step 5/5. Functionally, catalyzes the phosphorylation of the 3'-hydroxyl group of dephosphocoenzyme A to form coenzyme A. The polypeptide is Dephospho-CoA kinase (Jannaschia sp. (strain CCS1)).